We begin with the raw amino-acid sequence, 531 residues long: Polygalacturonase (531 aa).

A signal peptide spans 1-23 (MILSHRYTLIALAAAILSSGAHA). Asp307 acts as the Proton donor in catalysis. Residue His333 is part of the active site. Positions 518–531 (AFVPLKSVAPTSPI) are required for PGA export across the outer membrane and catalytic activity.

This sequence belongs to the glycosyl hydrolase 28 family. As to quaternary structure, monomer.

It is found in the secreted. It carries out the reaction (1,4-alpha-D-galacturonosyl)n+m + H2O = (1,4-alpha-D-galacturonosyl)n + (1,4-alpha-D-galacturonosyl)m.. Functionally, contributes to the wilt disease production on tomato. In Ralstonia nicotianae (strain ATCC BAA-1114 / GMI1000) (Ralstonia solanacearum), this protein is Polygalacturonase (pglA).